A 99-amino-acid chain; its full sequence is Malonate decarboxylase acyl carrier protein (99 aa).

Ser-25 bears the O-(phosphoribosyl dephospho-coenzyme A)serine mark.

The protein belongs to the MdcC family. Post-translationally, covalently binds the prosthetic group of malonate decarboxylase.

Its subcellular location is the cytoplasm. Subunit of malonate decarboxylase, it is an acyl carrier protein to which acetyl and malonyl thioester residues are bound via a 2'-(5''-phosphoribosyl)-3'-dephospho-CoA prosthetic group and turn over during the catalytic mechanism. This chain is Malonate decarboxylase acyl carrier protein, found in Pseudomonas putida (Arthrobacter siderocapsulatus).